Consider the following 262-residue polypeptide: Ribosomal RNA small subunit methyltransferase A (262 aa).

S-adenosyl-L-methionine is bound by residues N14, L16, G41, E62, D87, and N109.

It belongs to the class I-like SAM-binding methyltransferase superfamily. rRNA adenine N(6)-methyltransferase family. RsmA subfamily.

Its subcellular location is the cytoplasm. It catalyses the reaction adenosine(1518)/adenosine(1519) in 16S rRNA + 4 S-adenosyl-L-methionine = N(6)-dimethyladenosine(1518)/N(6)-dimethyladenosine(1519) in 16S rRNA + 4 S-adenosyl-L-homocysteine + 4 H(+). Specifically dimethylates two adjacent adenosines (A1518 and A1519) in the loop of a conserved hairpin near the 3'-end of 16S rRNA in the 30S particle. May play a critical role in biogenesis of 30S subunits. The protein is Ribosomal RNA small subunit methyltransferase A of Francisella tularensis subsp. novicida (strain U112).